Here is a 511-residue protein sequence, read N- to C-terminus: Bifunctional purine biosynthesis protein PurH (511 aa).

The MGS-like domain occupies 1-145; it reads MKKRALVSVS…KNHKFVSVIV (145 aa).

Belongs to the PurH family.

The enzyme catalyses (6R)-10-formyltetrahydrofolate + 5-amino-1-(5-phospho-beta-D-ribosyl)imidazole-4-carboxamide = 5-formamido-1-(5-phospho-D-ribosyl)imidazole-4-carboxamide + (6S)-5,6,7,8-tetrahydrofolate. It catalyses the reaction IMP + H2O = 5-formamido-1-(5-phospho-D-ribosyl)imidazole-4-carboxamide. The protein operates within purine metabolism; IMP biosynthesis via de novo pathway; 5-formamido-1-(5-phospho-D-ribosyl)imidazole-4-carboxamide from 5-amino-1-(5-phospho-D-ribosyl)imidazole-4-carboxamide (10-formyl THF route): step 1/1. It functions in the pathway purine metabolism; IMP biosynthesis via de novo pathway; IMP from 5-formamido-1-(5-phospho-D-ribosyl)imidazole-4-carboxamide: step 1/1. The chain is Bifunctional purine biosynthesis protein PurH from Bacillus cereus (strain ZK / E33L).